We begin with the raw amino-acid sequence, 255 residues long: Large ribosomal subunit protein uL4 (255 aa).

The protein belongs to the universal ribosomal protein uL4 family. As to quaternary structure, part of the 50S ribosomal subunit.

Its function is as follows. One of the primary rRNA binding proteins, this protein initially binds near the 5'-end of the 23S rRNA. It is important during the early stages of 50S assembly. It makes multiple contacts with different domains of the 23S rRNA in the assembled 50S subunit and ribosome. Functionally, forms part of the polypeptide exit tunnel. This is Large ribosomal subunit protein uL4 from Pyrococcus furiosus (strain ATCC 43587 / DSM 3638 / JCM 8422 / Vc1).